Consider the following 237-residue polypeptide: Bax inhibitor 1 (237 aa).

Residues 1–29 (MNIFDRKINFDALLKFSHITPSTQQHLKK) are Cytoplasmic-facing. Residue lysine 7 forms a Glycyl lysine isopeptide (Lys-Gly) (interchain with G-Cter in ubiquitin) linkage. A helical transmembrane segment spans residues 30-50 (VYASFALCMFVAAAGAYVHVV). Topologically, residues 51-52 (TH) are lumenal. Residues 53–73 (FIQAGLLSALGSLALMIWLMA) form a helical membrane-spanning segment. Residues 74–86 (TPHSHETEQKRLG) lie on the Cytoplasmic side of the membrane. The chain crosses the membrane as a helical span at residues 87-107 (LLAGFAFLTGVGLGPALELCI). Topologically, residues 108–112 (AVNPS) are lumenal. A helical membrane pass occupies residues 113–133 (ILPTAFMGTAMIFTCFSLSAL). Topologically, residues 134–139 (YARRRS) are cytoplasmic. Residues 140–160 (YLFLGGILMSAMSLMLLSSLG) traverse the membrane as a helical segment. Topologically, residues 161–166 (NLFFGS) are lumenal. The chain crosses the membrane as a helical span at residues 167 to 187 (IWLFQANLYLGLLVMCGFVLF). The Cytoplasmic portion of the chain corresponds to 188-206 (DTQLIIEKAEHGDKDYIWH). An intramembrane region (helical) is located at residues 207–227 (CVDLFLDFVTLFRKLMLILAF). At 228 to 237 (NEKDKKKEKK) the chain is on the cytoplasmic side.

The protein belongs to the BI1 family. In terms of assembly, interacts with BCL2. Interacts with BCL2L1. Interacts with ERN1. Ubiquitinated by BFAR, leading to proteasomal degradation. Highly abundant in adult testis.

The protein localises to the endoplasmic reticulum membrane. Functionally, endoplasmic reticulum (ER)-resident protein that confers cellular protection as an anti-apoptotic protein by limiting multiple stress-inducing pathways surrounding the endoplasmic reticulum and mitochondria. Inhibits the activities of the key sensor for the endoplasmic reticulum unfolded protein response IRE1alpha/ERN1 both directly and by blocking BAX/BAK binding. Modulates ER calcium homeostasis by acting as a calcium-leak channel. Negatively regulates autophagy and autophagosome formation, especially during periods of nutrient deprivation, and reduces cell survival during starvation. The chain is Bax inhibitor 1 (Tmbim6) from Mus musculus (Mouse).